A 146-amino-acid polypeptide reads, in one-letter code: SecB-like chaperone SmegB (146 aa).

The protein belongs to the SecB-like family.

In terms of biological role, chaperone component of an orphan antitoxin chaperone (AC) system; there is no toxin gene in close genomic proximity. When expressed in E.coli complements the cold-sensitive phenotype of a secB deletion, suggesting it may have a generic chaperone function. Does not however complement the toxin-neutralizing effect of its M.tuberculosis paralog Rv1957 (AC P95257) in E.coli, probably because the antitoxin genes are not from the same family. The protein is SecB-like chaperone SmegB of Mycolicibacterium smegmatis (strain ATCC 700084 / mc(2)155) (Mycobacterium smegmatis).